A 478-amino-acid polypeptide reads, in one-letter code: D-ribulose kinase (478 aa).

A chloroplast-targeting transit peptide spans 1–38 (MLILRQFQISSFELFQSPKQTGFYSSSRSVPLPRTRFY). Residues D60, 64 to 67 (SGGR), and D278 each bind substrate. Residues S300, G338, and 433 to 437 (GGAKN) each bind ATP.

The protein belongs to the FGGY kinase family. It depends on a divalent metal cation as a cofactor.

It is found in the plastid. The protein resides in the chloroplast. The enzyme catalyses D-ribulose + ATP = D-ribulose 5-phosphate + ADP + H(+). Functionally, exhibits ATP hydrolysis without substrate. Can phosphorylate D-ribulose with low efficiency. In Arabidopsis thaliana (Mouse-ear cress), this protein is D-ribulose kinase.